Consider the following 285-residue polypeptide: 4-diphosphocytidyl-2-C-methyl-D-erythritol kinase (285 aa).

The active site involves lysine 11. 93 to 103 is an ATP binding site; the sequence is PLAAGLAGGSA. Aspartate 135 is an active-site residue.

The protein belongs to the GHMP kinase family. IspE subfamily.

It catalyses the reaction 4-CDP-2-C-methyl-D-erythritol + ATP = 4-CDP-2-C-methyl-D-erythritol 2-phosphate + ADP + H(+). The protein operates within isoprenoid biosynthesis; isopentenyl diphosphate biosynthesis via DXP pathway; isopentenyl diphosphate from 1-deoxy-D-xylulose 5-phosphate: step 3/6. Catalyzes the phosphorylation of the position 2 hydroxy group of 4-diphosphocytidyl-2C-methyl-D-erythritol. The polypeptide is 4-diphosphocytidyl-2-C-methyl-D-erythritol kinase (Moorella thermoacetica (strain ATCC 39073 / JCM 9320)).